Consider the following 697-residue polypeptide: DNA ligase (697 aa).

NAD(+)-binding positions include 41–45 (DPVYD), 90–91 (SL), and Glu-129. Lys-131 serves as the catalytic N6-AMP-lysine intermediate. Positions 152, 189, 308, and 332 each coordinate NAD(+). Residues Cys-426, Cys-429, Cys-444, and Cys-449 each coordinate Zn(2+). A BRCT domain is found at 617–697 (AANHHLTGST…ALQNMLRGST (81 aa)).

It belongs to the NAD-dependent DNA ligase family. LigA subfamily. It depends on Mg(2+) as a cofactor. The cofactor is Mn(2+).

It carries out the reaction NAD(+) + (deoxyribonucleotide)n-3'-hydroxyl + 5'-phospho-(deoxyribonucleotide)m = (deoxyribonucleotide)n+m + AMP + beta-nicotinamide D-nucleotide.. In terms of biological role, DNA ligase that catalyzes the formation of phosphodiester linkages between 5'-phosphoryl and 3'-hydroxyl groups in double-stranded DNA using NAD as a coenzyme and as the energy source for the reaction. It is essential for DNA replication and repair of damaged DNA. This chain is DNA ligase, found in Synechococcus sp. (strain CC9311).